We begin with the raw amino-acid sequence, 364 residues long: Chorismate synthase (364 aa).

Residue Arg48 participates in NADP(+) binding. FMN-binding positions include Arg125–Ser127, Asn237–Ala238, Gly277, Lys292–Ser296, and Arg318.

It belongs to the chorismate synthase family. In terms of assembly, homotetramer. It depends on FMNH2 as a cofactor.

It carries out the reaction 5-O-(1-carboxyvinyl)-3-phosphoshikimate = chorismate + phosphate. It functions in the pathway metabolic intermediate biosynthesis; chorismate biosynthesis; chorismate from D-erythrose 4-phosphate and phosphoenolpyruvate: step 7/7. Its function is as follows. Catalyzes the anti-1,4-elimination of the C-3 phosphate and the C-6 proR hydrogen from 5-enolpyruvylshikimate-3-phosphate (EPSP) to yield chorismate, which is the branch point compound that serves as the starting substrate for the three terminal pathways of aromatic amino acid biosynthesis. This reaction introduces a second double bond into the aromatic ring system. The protein is Chorismate synthase of Albidiferax ferrireducens (strain ATCC BAA-621 / DSM 15236 / T118) (Rhodoferax ferrireducens).